The following is a 491-amino-acid chain: Interferon regulatory factor 3 (491 aa).

A DNA-binding region (IRF tryptophan pentad repeat) is located at residues 12–116 (KLRFGPWLLN…DPHKVYAVAS (105 aa)).

The protein belongs to the IRF family. As to expression, widely expressed with higher expression in lung, spleen and intestine.

It localises to the cytoplasm. The protein localises to the nucleus. Functionally, key transcriptional regulator of type I interferon (IFN)-dependent immune responses which plays a critical role in the innate immune response against DNA and RNA viruses. Regulates the transcription of type I IFN genes (IFN-alpha and IFN-beta) and IFN-stimulated genes (ISG) by binding to an interferon-stimulated response element (ISRE) in their promoters. May activate transcription by complex formation with other transcriptional factors, possibly members of the STAT family. Binds specifically to the IFN-stimulated response element (ISRE) but not to the IRF-1 binding site PRD-I. The polypeptide is Interferon regulatory factor 3 (IRF3) (Gallus gallus (Chicken)).